We begin with the raw amino-acid sequence, 722 residues long: Lysophospholipid acyltransferase 6 (722 aa).

Helical transmembrane passes span 25-45, 62-84, 104-123, 180-200, and 243-263; these read MVGL…ALFL, LRHT…QQAI, IVQR…VHLM, ALEY…PLVF, and KVVG…IYPV. Catalysis depends on residues Asn-349 and His-381. Helical transmembrane passes span 378-398, 424-444, and 452-472; these read AVWH…AVVV, ILTC…FVLL, and LYLR…FILP. Polar residues-rich tracts occupy residues 485–511 and 549–570; these read NGNG…STAA and VEQP…QQQP. Disordered regions lie at residues 485 to 582 and 650 to 687; these read NGNG…PTCA and NGAI…DLHP.

This sequence belongs to the membrane-bound acyltransferase family.

The protein resides in the endoplasmic reticulum. The protein localises to the membrane. It carries out the reaction a 1-acyl-sn-glycero-3-phospho-L-serine + an acyl-CoA = a 1,2-diacyl-sn-glycero-3-phospho-L-serine + CoA. It catalyses the reaction 1-(9Z-octadecenoyl)-sn-glycero-3-phospho-L-serine + (9Z)-hexadecenoyl-CoA = 1-(9Z-octadecenoyl)-2-(9Z-hexadecenoyl)-sn-glycero-3-phospho-L-serine + CoA. The catalysed reaction is 1-(9Z-octadecenoyl)-sn-glycero-3-phospho-L-serine + (9Z)-octadecenoyl-CoA = 1,2-di-(9Z)-octadecenoyl-sn-glycero-3-phospho-L-serine + CoA. The enzyme catalyses a 1-acyl-sn-glycero-3-phosphocholine + an acyl-CoA = a 1,2-diacyl-sn-glycero-3-phosphocholine + CoA. It carries out the reaction 1-hexadecanoyl-sn-glycero-3-phosphocholine + (9Z)-octadecenoyl-CoA = 1-hexadecanoyl-2-(9Z-octadecenoyl)-sn-glycero-3-phosphocholine + CoA. It catalyses the reaction (9Z)-hexadecenoyl-CoA + 1-hexadecanoyl-sn-glycero-3-phosphocholine = 1-hexadecanoyl-2-(9Z-hexadecenoyl)-sn-glycero-3-phosphocholine + CoA. The catalysed reaction is a 1-acyl-sn-glycero-3-phosphoethanolamine + an acyl-CoA = a 1,2-diacyl-sn-glycero-3-phosphoethanolamine + CoA. The enzyme catalyses 1-hexadecanoyl-sn-glycero-3-phosphoethanolamine + (9Z)-octadecenoyl-CoA = 1-hexadecanoyl-2-(9Z-octadecenoyl)-sn-glycero-3-phosphoethanolamine + CoA. It carries out the reaction 1-hexadecanoyl-sn-glycero-3-phosphoethanolamine + (9Z,12Z)-octadecadienoyl-CoA = 1-hexadecanoyl-2-(9Z,12Z-octadecadienoyl)-sn-glycero-3-phosphoethanolamine + CoA. It catalyses the reaction 1-hexadecanoyl-sn-glycero-3-phosphoethanolamine + (9Z)-hexadecenoyl-CoA = 1-hexadecanoyl-2-(9Z)-hexadecenoyl-sn-glycero-3-phosphoethanolamine + CoA. The catalysed reaction is 1-(9Z-octadecenoyl)-sn-glycero-3-phospho-(1'-sn-glycerol) + (9Z)-octadecenoyl-CoA = 1,2-di-(9Z-octadecenoyl)-sn-glycero-3-phospho-(1'-sn-glycerol) + CoA. It functions in the pathway lipid metabolism; phospholipid metabolism. Acyltransferase with broad-specificity, that mediates the acylation of lysophospholipids to produce phospholipids (glycerophospholipids). Converts lysophosphatidylserine (1-acyl-2-hydroxy-sn-glycero-3-phospho-L-serine or LPS) to phosphatidylserine (1,2-diacyl-sn-glycero-3-phospho-L-serine or PS) (LPSAT activity), lysophosphatidylcholine (1-acyl-sn-glycero-3-phosphocholine or LPC) to phosphatidylcholine (1,2-diacyl-sn-glycero-3-phosphocholine or PC) (LPCAT activity), also lysophosphatidylethanolamine (1-acyl-sn-glycero-3-phosphochethanolamine or LPE) to phosphatidylchethanolamine (LPEAT activity) and lysophosphatidylglycerol (1-acyl-2-hydroxy-sn-glycero-3-phospho-(1'-sn-glycerol) or LPG) to phosphatidylglycerol (1,2-diacyl-sn-glycero-3-phospho-(1'-sn-glycerol) or PG) (LPGAT activity). Has a preference for unsaturated fatty acids of at least 16 carbons such as oleoyl-CoA ((9Z)-octadecenoyl-CoA) and palmitoleoyl-CoA ((9Z)-hexadecenoyl-CoA). Glycerophospholipids are important structural and functional components of cellular membrane, acyl-chain remodeling regulates the molecular species distribution of glycerophospholipids which can affect membrane fluidity and curvature. Essential for fertility and viability together with Nessy protein (Nes). The polypeptide is Lysophospholipid acyltransferase 6 (Drosophila melanogaster (Fruit fly)).